Reading from the N-terminus, the 557-residue chain is Anti-Muellerian hormone type-2 receptor (557 aa).

The N-terminal stretch at 1–17 (MLGTLGLWTLLPAAAQV) is a signal peptide. The Extracellular portion of the chain corresponds to 18–144 (SPNRRTCVFF…QEPQATPGGP (127 aa)). 2 disulfides stabilise this stretch: cysteine 55/cysteine 79 and cysteine 92/cysteine 109. An N-linked (GlcNAc...) asparagine glycan is attached at asparagine 66. Residue asparagine 119 is glycosylated (N-linked (GlcNAc...) asparagine). The helical transmembrane segment at 145 to 165 (IWMAQLLLGVFLVLLLSIIIL) threads the bilayer. Over 166–557 (ALLQRKACRV…SVQQGSGSKS (392 aa)) the chain is Cytoplasmic. One can recognise a Protein kinase domain in the interval 201–511 (LRFSQVIQEG…RLAALAYPQV (311 aa)). ATP is bound by residues 207–215 (IQEGGHAVV) and lysine 228. Aspartate 331 serves as the catalytic Proton acceptor.

The protein belongs to the protein kinase superfamily. TKL Ser/Thr protein kinase family. TGFB receptor subfamily. In terms of assembly, interacts with type I receptor ACVR1. The cofactor is Mg(2+). Requires Mn(2+) as cofactor.

It is found in the membrane. It catalyses the reaction L-threonyl-[receptor-protein] + ATP = O-phospho-L-threonyl-[receptor-protein] + ADP + H(+). It carries out the reaction L-seryl-[receptor-protein] + ATP = O-phospho-L-seryl-[receptor-protein] + ADP + H(+). Functionally, on ligand binding, forms a receptor complex consisting of two type II and two type I transmembrane serine/threonine kinases. Type II receptors phosphorylate and activate type I receptors which autophosphorylate, then bind and activate SMAD transcriptional regulators. Receptor for anti-Muellerian hormone. This is Anti-Muellerian hormone type-2 receptor (Amhr2) from Rattus norvegicus (Rat).